Here is a 332-residue protein sequence, read N- to C-terminus: MGKKRINEVSTTEGAPAEKKKKVEKWLNTSSEDGEGTKKKKRPWRNKVRKLAAKKAAAERRVENSEESTILEPVATAEEATKKKKKRGPKKKKYKPEAAEVEKKNEEGDTVKENPIAEAKKRLDAGRFRMLNEKLYTCTGSEAFDFFKEDRTAFDLYHRGFADQVKKWPNHPLREIIRWLQAKPDKQAVFDLGCGEAKIAEAVGEKHTIRSFDLVAVNDRVESCDMSKLPAEDGSADVVIFCLSLMGTNLYDFIKEARRVLRTGGVLKIGEVTSRFVSIKQFCEAINKMGFETTNRRQLTDYFMMFDFRKIDKVEQKRPYGLKLKPCLYKKR.

The segment at 1-109 is disordered; that stretch reads MGKKRINEVS…EVEKKNEEGD (109 aa). 2 stretches are compositionally biased toward basic residues: residues 38 to 53 and 82 to 94; these read KKKKRPWRNKVRKLAA and KKKKKRGPKKKKY. The span at 95 to 109 shows a compositional bias: basic and acidic residues; that stretch reads KPEAAEVEKKNEEGD. H158, G193, D213, D225, M226, and C242 together coordinate S-adenosyl-L-methionine.

The protein belongs to the methyltransferase superfamily. RRP8 family.

The protein localises to the nucleus. Its subcellular location is the nucleolus. Probable methyltransferase required to silence rDNA. The protein is Ribosomal RNA-processing protein 8 (rrp-8) of Caenorhabditis briggsae.